A 124-amino-acid polypeptide reads, in one-letter code: Large ribosomal subunit protein bL17 (124 aa).

It belongs to the bacterial ribosomal protein bL17 family. In terms of assembly, part of the 50S ribosomal subunit. Contacts protein L32.

This chain is Large ribosomal subunit protein bL17, found in Trichlorobacter lovleyi (strain ATCC BAA-1151 / DSM 17278 / SZ) (Geobacter lovleyi).